The following is a 681-amino-acid chain: Macrolide export ATP-binding/permease protein MacB (681 aa).

The region spanning 6-244 (LKLAAVTRRF…FAEVGVGAAA (239 aa)) is the ABC transporter domain. Residue 42–49 (GASGSGKS) participates in ATP binding. Over residues 246-273 (TETAADTRSAPASGDAPPPANNDTAADP) the composition is skewed to low complexity. The segment at 246–298 (TETAADTRSAPASGDAPPPANNDTAADPAPAPDASPPAPAVSPKHAGWRGSRS) is disordered. The segment covering 274–285 (APAPDASPPAPA) has biased composition (pro residues). A run of 4 helical transmembrane segments spans residues 306–326 (CLTM…VAVG), 554–574 (LTLL…IGVM), 611–631 (LVCL…GALF), and 644–664 (AGAI…FGFM).

This sequence belongs to the ABC transporter superfamily. Macrolide exporter (TC 3.A.1.122) family. As to quaternary structure, homodimer.

The protein localises to the cell inner membrane. Non-canonical ABC transporter that contains transmembrane domains (TMD), which form a pore in the inner membrane, and an ATP-binding domain (NBD), which is responsible for energy generation. Confers resistance against macrolides. In Burkholderia orbicola (strain AU 1054), this protein is Macrolide export ATP-binding/permease protein MacB.